We begin with the raw amino-acid sequence, 91 residues long: Probable Fe(2+)-trafficking protein (91 aa).

Belongs to the Fe(2+)-trafficking protein family.

In terms of biological role, could be a mediator in iron transactions between iron acquisition and iron-requiring processes, such as synthesis and/or repair of Fe-S clusters in biosynthetic enzymes. The sequence is that of Probable Fe(2+)-trafficking protein from Burkholderia thailandensis (strain ATCC 700388 / DSM 13276 / CCUG 48851 / CIP 106301 / E264).